Here is a 379-residue protein sequence, read N- to C-terminus: MAPTTTATAAAEQAPPPQHTRKAVGLAAHDDSGHLTPIRISRRKTGDDDVAIKVLYCGICHSDLHTIKNEWRNAVYPVVAGHEITGVVTEVGKNVARFKAGDEVGVGCMVNTCGGCESCRDGCENYCSGGVVFTYNSVDRDGTRTYGGYSDAVVVSQRFVVRFPSSAGGGAGAALPLDSGAPLLCAGVTVYAPMRQHGLCEAGKHVGVVGLGGLGHVAVKFARAFGMRVTVISTSPVKRQEALERLGADGFIVSTNASEMKAAMGTMHGIINTASASTSMHSYLALLKPKGKMILVGLPEKPLQIPTFALVGGGKILAGSCMGSISETQEMIDFAAEHGVAADIELIGADEVNTAMERLAKGDVRYRFVVDIGNTLRSD.

Over residues 1–13 (MAPTTTATAAAEQ) the composition is skewed to low complexity. A disordered region spans residues 1-21 (MAPTTTATAAAEQAPPPQHTR). Cys-60 serves as a coordination point for Zn(2+). Ser-62 provides a ligand contact to NADP(+). Residues His-82, Glu-83, Cys-113, Cys-116, Cys-119, Cys-127, and Cys-185 each coordinate Zn(2+). NADP(+)-binding positions include Thr-189, 210 to 215 (GLGGLG), 233 to 238 (STSPVK), Thr-273, Gly-297, and 320 to 322 (SCM).

Belongs to the zinc-containing alcohol dehydrogenase family. Homodimer. The cofactor is Zn(2+). As to expression, expressed in roots, first internodes and panicles. Expressed in the vascular bundles and sclerenchyma cells below the epidermis in leaves and stems.

The enzyme catalyses (E)-cinnamyl alcohol + NADP(+) = (E)-cinnamaldehyde + NADPH + H(+). It catalyses the reaction (E)-coniferol + NADP(+) = (E)-coniferaldehyde + NADPH + H(+). It carries out the reaction (E)-sinapyl alcohol + NADP(+) = (E)-sinapaldehyde + NADPH + H(+). The catalysed reaction is (E)-4-coumaroyl alcohol + NADP(+) = (E)-4-coumaraldehyde + NADPH + H(+). The enzyme catalyses (E)-caffeyl alcohol + NADP(+) = (E)-caffeyl aldehyde + NADPH + H(+). The protein operates within aromatic compound metabolism; phenylpropanoid biosynthesis. In terms of biological role, involved in lignin biosynthesis. May catalyze the final step specific for the production of lignin monomers, like coniferyl alcohol, sinapyl alcohol and 4-coumaryl alcohol. In Oryza sativa subsp. japonica (Rice), this protein is Cinnamyl alcohol dehydrogenase 7.